The chain runs to 432 residues: Homogentisate 1,2-dioxygenase (432 aa).

Catalysis depends on His-286, which acts as the Proton acceptor. Fe cation-binding residues include His-329 and Glu-335. Homogentisate contacts are provided by Tyr-344 and His-365. Residue His-365 participates in Fe cation binding.

It belongs to the homogentisate dioxygenase family. In terms of assembly, hexamer; dimer of trimers. Fe cation is required as a cofactor.

It carries out the reaction homogentisate + O2 = 4-maleylacetoacetate + H(+). The protein operates within amino-acid degradation; L-phenylalanine degradation; acetoacetate and fumarate from L-phenylalanine: step 4/6. In terms of biological role, involved in the catabolism of homogentisate (2,5-dihydroxyphenylacetate or 2,5-OH-PhAc), a central intermediate in the degradation of phenylalanine and tyrosine. Catalyzes the oxidative ring cleavage of the aromatic ring of homogentisate to yield maleylacetoacetate. In Bordetella bronchiseptica (strain ATCC BAA-588 / NCTC 13252 / RB50) (Alcaligenes bronchisepticus), this protein is Homogentisate 1,2-dioxygenase.